Consider the following 446-residue polypeptide: Probable glycine dehydrogenase (decarboxylating) subunit 1 (446 aa).

Belongs to the GcvP family. N-terminal subunit subfamily. As to quaternary structure, the glycine cleavage system is composed of four proteins: P, T, L and H. In this organism, the P 'protein' is a heterodimer of two subunits.

The catalysed reaction is N(6)-[(R)-lipoyl]-L-lysyl-[glycine-cleavage complex H protein] + glycine + H(+) = N(6)-[(R)-S(8)-aminomethyldihydrolipoyl]-L-lysyl-[glycine-cleavage complex H protein] + CO2. In terms of biological role, the glycine cleavage system catalyzes the degradation of glycine. The P protein binds the alpha-amino group of glycine through its pyridoxal phosphate cofactor; CO(2) is released and the remaining methylamine moiety is then transferred to the lipoamide cofactor of the H protein. The sequence is that of Probable glycine dehydrogenase (decarboxylating) subunit 1 from Desulforamulus reducens (strain ATCC BAA-1160 / DSM 100696 / MI-1) (Desulfotomaculum reducens).